Here is a 262-residue protein sequence, read N- to C-terminus: MLKVDHASVFFAARYGRTVHALDRVSFDIPERGFVVALGASGCGKSTLLNAIAGFLPLSDGRITLDGRAVEQPGADRGVVFQKDSLLPWKSVIDNVALGLKFAGVKRRERQARALELLRLVGLDEFAGAFPYELSGGMRQRVGIARALATNPDILLMDEPFGALDSLTREQMQELLVSIWDKTAKKVFFITHSIEEALFLGTQVLVMSPRPGRVVARFDLDFVRRFAETGDARSIKASPQFAELREEIRAILHSTEDLRSAA.

Residues 4-234 (VDHASVFFAA…RFAETGDARS (231 aa)) enclose the ABC transporter domain. 39-46 (GASGCGKS) serves as a coordination point for ATP.

It belongs to the ABC transporter superfamily. Taurine importer (TC 3.A.1.17.1) family. As to quaternary structure, the complex is composed of two ATP-binding proteins (TauB), two transmembrane proteins (TauC) and a solute-binding protein (TauA).

It localises to the cell inner membrane. The enzyme catalyses taurine(out) + ATP + H2O = taurine(in) + ADP + phosphate + H(+). Its function is as follows. Part of the ABC transporter complex TauABC involved in taurine import. Responsible for energy coupling to the transport system. This Rhizobium johnstonii (strain DSM 114642 / LMG 32736 / 3841) (Rhizobium leguminosarum bv. viciae) protein is Taurine import ATP-binding protein TauB.